A 410-amino-acid chain; its full sequence is Protein disulfide isomerase CRELD1 (410 aa).

Positions 1–29 are cleaved as a signal peptide; it reads MGMSRRMFLTVYGSLWLLLLLSRPGVSKP. At 30–352 the chain is on the extracellular side; the sequence is QLCQTCQNLV…GLFDDITDDE (323 aa). The CXXC motif lies at 32 to 35; it reads CQTC. Cystine bridges form between C32-C35, C141-C155, C149-C167, and C169-C178. The 41-residue stretch at 139 to 179 folds into the EGF-like 1 domain; the sequence is LSCPGGTEKPCSGNGQCNGDGTRFGTGVCDCYTSYGGPVCM. 2 FU repeats span residues 194–243 and 254–301; these read HLVC…DHCK and SYEC…ELPK. The CXXC motif lies at 264–267; sequence CIGC. Intrachain disulfides connect C264/C267, C295/C309, C302/C318, and C320/C331. The EGF-like 2; calcium-binding domain occupies 291–332; that stretch reads DVDECDSELPKCKGSHEECVNTEGSFTCVCEKDYSRIDGMCR. A helical membrane pass occupies residues 353–373; the sequence is VVVLQQMFFGVVICALATLAA. Residue K374 is a topological domain, cytoplasmic. A helical transmembrane segment spans residues 375 to 395; the sequence is GDMVFTAIFIGAVAAMAGYWL. Over 396–410 the chain is Extracellular; the sequence is SEKGDRALDSFMKGR.

It belongs to the CRELD family.

The protein localises to the membrane. It carries out the reaction Catalyzes the rearrangement of -S-S- bonds in proteins.. Its function is as follows. Protein disulfide isomerase. Promotes the localization of acetylcholine receptors (AChRs) to the plasma membrane. This chain is Protein disulfide isomerase CRELD1 (creld1), found in Xenopus tropicalis (Western clawed frog).